Here is a 208-residue protein sequence, read N- to C-terminus: Uracil phosphoribosyltransferase (208 aa).

5-phospho-alpha-D-ribose 1-diphosphate-binding positions include Arg78, Arg103, and 130–138; that span reads DPMFATGGT. Uracil is bound by residues Ile193 and 198-200; that span reads GDA. Residue Asp199 coordinates 5-phospho-alpha-D-ribose 1-diphosphate.

Belongs to the UPRTase family. The cofactor is Mg(2+).

It carries out the reaction UMP + diphosphate = 5-phospho-alpha-D-ribose 1-diphosphate + uracil. It functions in the pathway pyrimidine metabolism; UMP biosynthesis via salvage pathway; UMP from uracil: step 1/1. With respect to regulation, allosterically activated by GTP. Its function is as follows. Catalyzes the conversion of uracil and 5-phospho-alpha-D-ribose 1-diphosphate (PRPP) to UMP and diphosphate. This Campylobacter curvus (strain 525.92) protein is Uracil phosphoribosyltransferase.